A 126-amino-acid chain; its full sequence is MNNILAIALGAAIGANLRYGIGLWAAQRFGTAWPYGTFIINLLGCLGIGLLLTLISTRLTLSEPVRLMLVTGLLGGFTTFSTFGYESFSLLSSGNWLPAIGYMVGSVVGGLIAVIIGVGLGRWFGG.

4 helical membrane passes run 4–24 (ILAIALGAAIGANLRYGIGLW), 35–55 (YGTFIINLLGCLGIGLLLTLI), 68–88 (MLVTGLLGGFTTFSTFGYESF), and 100–120 (IGYMVGSVVGGLIAVIIGVGL). Gly75 and Thr78 together coordinate Na(+).

This sequence belongs to the fluoride channel Fluc/FEX (TC 1.A.43) family.

The protein resides in the cell membrane. The catalysed reaction is fluoride(in) = fluoride(out). Its activity is regulated as follows. Na(+) is not transported, but it plays an essential structural role and its presence is essential for fluoride channel function. Its function is as follows. Fluoride-specific ion channel. Important for reducing fluoride concentration in the cell, thus reducing its toxicity. The polypeptide is Fluoride-specific ion channel FluC (Chloroflexus aurantiacus (strain ATCC 29366 / DSM 635 / J-10-fl)).